Here is a 266-residue protein sequence, read N- to C-terminus: Regulatory protein RecX (266 aa).

It belongs to the RecX family.

The protein resides in the cytoplasm. In terms of biological role, modulates RecA activity. The protein is Regulatory protein RecX of Leuconostoc citreum (strain KM20).